Consider the following 413-residue polypeptide: Alpha-1-antitrypsin-like protein GS55-MS (413 aa).

An N-terminal signal peptide occupies residues 1–24 (MPSSISWGLLLLAGLSCLVAGSLA). Residues N65, N102, and N266 are each glycosylated (N-linked (GlcNAc...) asparagine). The interval 368 to 387 (GATFLEMMPMSLPPEVKFDK) is RCL.

This sequence belongs to the serpin family.

It is found in the secreted. Functionally, inhibitor of serine proteases. Its primary target is elastase, but it also has a moderate affinity for plasmin and thrombin. The polypeptide is Alpha-1-antitrypsin-like protein GS55-MS (Ictidomys tridecemlineatus (Thirteen-lined ground squirrel)).